A 386-amino-acid chain; its full sequence is Arginine biosynthesis bifunctional protein ArgJ (386 aa).

Residues threonine 148, lysine 170, threonine 181, glutamate 261, asparagine 381, and serine 386 each contribute to the substrate site. Threonine 181 acts as the Nucleophile in catalysis.

The protein belongs to the ArgJ family. In terms of assembly, heterotetramer of two alpha and two beta chains.

It localises to the cytoplasm. The enzyme catalyses N(2)-acetyl-L-ornithine + L-glutamate = N-acetyl-L-glutamate + L-ornithine. The catalysed reaction is L-glutamate + acetyl-CoA = N-acetyl-L-glutamate + CoA + H(+). It participates in amino-acid biosynthesis; L-arginine biosynthesis; L-ornithine and N-acetyl-L-glutamate from L-glutamate and N(2)-acetyl-L-ornithine (cyclic): step 1/1. It functions in the pathway amino-acid biosynthesis; L-arginine biosynthesis; N(2)-acetyl-L-ornithine from L-glutamate: step 1/4. Functionally, catalyzes two activities which are involved in the cyclic version of arginine biosynthesis: the synthesis of N-acetylglutamate from glutamate and acetyl-CoA as the acetyl donor, and of ornithine by transacetylation between N(2)-acetylornithine and glutamate. The sequence is that of Arginine biosynthesis bifunctional protein ArgJ from Corynebacterium diphtheriae (strain ATCC 700971 / NCTC 13129 / Biotype gravis).